The primary structure comprises 203 residues: Outer-membrane lipoprotein carrier protein (203 aa).

Residues 1 to 21 (MKKLLVACCLLSGLISAHALA) form the signal peptide.

It belongs to the LolA family. As to quaternary structure, monomer.

It is found in the periplasm. In terms of biological role, participates in the translocation of lipoproteins from the inner membrane to the outer membrane. Only forms a complex with a lipoprotein if the residue after the N-terminal Cys is not an aspartate (The Asp acts as a targeting signal to indicate that the lipoprotein should stay in the inner membrane). This is Outer-membrane lipoprotein carrier protein from Yersinia enterocolitica serotype O:8 / biotype 1B (strain NCTC 13174 / 8081).